Here is a 324-residue protein sequence, read N- to C-terminus: mRNA decay activator protein ZFP36 (324 aa).

The necessary for nuclear export stretch occupies residues 1–15 (MDLAAIYKSLLSLSP). The segment at 1-98 (MDLAAIYKSL…PTSPTATPTT (98 aa)) is necessary and sufficient for the association with mRNA decay enzymes and mRNA decay activation. Necessary for localization of ARE-containing mRNAs to processing bodies (PBs) regions lie at residues 1-172 (MDLA…DLAA) and 98-324 (TSSR…SVSE). Over residues 15-46 (PELPSDLGETESSTSWASSGPWSLSSSDSSLP) the composition is skewed to low complexity. Residues 15 to 50 (PELPSDLGETESSTSWASSGPWSLSSSDSSLPEVAA) form a disordered region. At serine 58 the chain carries Phosphoserine; by MAPKAPK2. Serine 64 is modified (phosphoserine). One copy of the P-P-P-P-G repeat lies at 69–73 (PPPPG). The interval 76–100 (PLAPRPSSDWSPSPTSPTATPTTSS) is disordered. 2 positions are modified to phosphoserine: serine 86 and serine 88. Position 90 is a phosphothreonine (threonine 90). A Phosphoserine modification is found at serine 91. A necessary for nuclear localization region spans residues 93 to 166 (TATPTTSSRY…GSRCHFIHNP (74 aa)). A necessary for RNA-binding region spans residues 95 to 171 (TPTTSSRYKT…FIHNPSEDLA (77 aa)). 2 consecutive C3H1-type zinc fingers follow at residues 101-129 (RYKT…HGLG) and 139-167 (KYKT…HNPS). The tract at residues 101 to 192 (RYKTELCRTF…ISFSGLPSGR (92 aa)) is necessary for interaction with PABPN1. The residue at position 167 (serine 167) is a Phosphoserine. Residues 172–324 (APGHPHVLRQ…PIFNRISVSE (153 aa)) are necessary for mRNA decay activation. Serine 184 bears the Phosphoserine; by MAPKAPK2 mark. Disordered regions lie at residues 185–227 (FSGL…LLLS) and 270–324 (PSAH…SVSE). Serine 195 bears the Phosphoserine mark. The stretch at 196-200 (PPPAS) is one P-P-P-P-G repeat. Residues 204–214 (PSVSSWSFSPS) show a composition bias toward low complexity. Position 216 is a phosphoserine (serine 216). One copy of the P-P-P-P-G repeat lies at 218-222 (PPPPG). Serine 227 bears the Phosphoserine; by MAPK1; in vitro mark. Residues serine 274, serine 294, and serine 321 each carry the phosphoserine modification. The segment at 310–324 (APRRLPIFNRISVSE) is interaction with CNOT1.

In terms of assembly, associates with cytoplasmic CCR4-NOT and PAN2-PAN3 deadenylase complexes to trigger ARE-containing mRNA deadenylation and decay processes. Part of a mRNA decay activation complex at least composed of poly(A)-specific exoribonucleases CNOT6, EXOSC2 and XRN1 and mRNA-decapping enzymes DCP1A and DCP2. Associates with the RNA exosome complex. Interacts (via phosphorylated form) with 14-3-3 proteins; these interactions promote exclusion of ZFP36 from cytoplasmic stress granules in response to arsenite treatment in a MAPKAPK2-dependent manner and does not prevent CCR4-NOT deadenylase complex recruitment or ZFP36-induced ARE-containing mRNA deadenylation and decay processes. Interacts with 14-3-3 proteins; these interactions occur in response to rapamycin in an Akt-dependent manner. Interacts with AGO2 and AGO4. Interacts (via C-terminus) with CNOT1; this interaction occurs in a RNA-independent manner and induces mRNA deadenylation. Interacts (via N-terminus) with CNOT6. Interacts with CNOT6L. Interacts (via C-terminus) with CNOT7; this interaction occurs in a RNA-independent manner, induces mRNA deadenylation and is inhibited in a phosphorylation MAPKAPK2-dependent manner. Interacts (via unphosphorylated form) with CNOT8; this interaction occurs in a RNA-independent manner and is inhibited in a phosphorylation MAPKAPK2-dependent manner. Interacts with DCP1A. Interacts (via N-terminus) with DCP2. Interacts with EDC3. Interacts (via N-terminus) with EXOSC2. Interacts with heat shock 70 kDa proteins. Interacts with KHSRP; this interaction increases upon cytokine-induced treatment. Interacts with MAP3K4; this interaction enhances the association with SH3KBP1/CIN85. Interacts with MAPKAPK2; this interaction occurs upon skeletal muscle satellite cell activation. Interacts with NCL. Interacts with NUP214; this interaction increases upon lipopolysaccharide (LPS) stimulation. Interacts with PABPC1; this interaction occurs in a RNA-dependent manner. Interacts (via hypophosphorylated form) with PABPN1 (via RRM domain and C-terminal arginine-rich region); this interaction occurs in the nucleus in a RNA-independent manner, decreases in presence of single-stranded poly(A) RNA-oligomer and in a p38 MAPK-dependent-manner and inhibits nuclear poly(A) tail synthesis. Interacts with PAN2. Interacts (via C3H1-type zinc finger domains) with PKM. Interacts (via C3H1-type zinc finger domains) with nuclear RNA poly(A) polymerase. Interacts with PPP2CA; this interaction occurs in LPS-stimulated cells and induces ZFP36 dephosphorylation, and hence may promote ARE-containing mRNAs decay. Interacts (via C-terminus) with PRR5L (via C-terminus); this interaction may accelerate ZFP36-mediated mRNA decay during stress. Interacts (via C-terminus) with SFN; this interaction occurs in a phosphorylation-dependent manner. Interacts (via extreme C-terminal region) with SH3KBP1/CIN85 (via SH3 domains); this interaction enhances MAP3K4-induced phosphorylation of ZFP36 at Ser-64 and Ser-91 and does not alter neither ZFP36 binding to ARE-containing transcripts nor TNF-alpha mRNA decay. Interacts with XRN1. Interacts (via C-terminus and Ser-184 phosphorylated form) with YWHAB; this interaction occurs in a p38/MAPKAPK2-dependent manner, increases cytoplasmic localization of ZFP36 and protects ZFP36 from Ser-184 dephosphorylation by serine/threonine phosphatase 2A, and hence may be crucial for stabilizing ARE-containing mRNAs. Interacts (via phosphorylated form) with YWHAE. Interacts (via C-terminus) with YWHAG; this interaction occurs in a phosphorylation-dependent manner. Interacts with YWHAH; this interaction occurs in a phosphorylation-dependent manner. Interacts with YWHAQ; this interaction occurs in a phosphorylation-dependent manner. Interacts with (via C-terminus) YWHAZ; this interaction occurs in a phosphorylation-dependent manner. Does not interact with SH3KBP1. Interacts (via P-P-P-P-G repeats) with GIGYF2; the interaction is direct. Phosphorylated. Phosphorylation at serine and/or threonine residues occurs in a p38 MAPK- and MAPKAPK2-dependent manner. Phosphorylated by MAPKAPK2 at Ser-58 and Ser-184; phosphorylation increases its stability and cytoplasmic localization, promotes binding to 14-3-3 adapter proteins and inhibits the recruitment of cytoplasmic CCR4-NOT and PAN2-PAN3 deadenylase complexes to the mRNA decay machinery, thereby inhibiting ZFP36-induced ARE-containing mRNA deadenylation and decay processes. Phosphorylation by MAPKAPK2 does not impair ARE-containing RNA-binding. Phosphorylated in a MAPKAPK2- and p38 MAPK-dependent manner upon skeletal muscle satellite cell activation; this phosphorylation inhibits ZFP36-mediated mRNA decay activity, and hence stabilizes MYOD1 mRNA. Phosphorylated by MAPK1 upon mitogen stimulation. Phosphorylated at Ser-64 and Ser-91; these phosphorylations increase in a SH3KBP1-dependent manner. Phosphorylated at serine and threonine residues in a pyruvate kinase PKM- and p38 MAPK-dependent manner. Phosphorylation at Ser-58 may participate in the PKM-mediated degradation of ZFP36 in a p38 MAPK-dependent manner. Dephosphorylated by serine/threonine phosphatase 2A at Ser-184. In terms of processing, ubiquitinated; pyruvate kinase (PKM)-dependent ubiquitination leads to proteasomal degradation through a p38 MAPK signaling pathway.

The protein localises to the nucleus. The protein resides in the cytoplasm. It is found in the cytoplasmic granule. It localises to the P-body. Zinc-finger RNA-binding protein that destabilizes numerous cytoplasmic AU-rich element (ARE)-containing mRNA transcripts by promoting their poly(A) tail removal or deadenylation, and hence provide a mechanism for attenuating protein synthesis. Acts as an 3'-untranslated region (UTR) ARE mRNA-binding adapter protein to communicate signaling events to the mRNA decay machinery. Recruits deadenylase CNOT7 (and probably the CCR4-NOT complex) via association with CNOT1, and hence promotes ARE-mediated mRNA deadenylation. Also functions by recruiting components of the cytoplasmic RNA decay machinery to the bound ARE-containing mRNAs. Self regulates by destabilizing its own mRNA. Binds to 3'-UTR ARE of numerous mRNAs. Also binds to ARE of its own mRNA. Plays a role in anti-inflammatory responses; suppresses tumor necrosis factor (TNF)-alpha production by stimulating ARE-mediated TNF-alpha mRNA decay and several other inflammatory ARE-containing mRNAs in interferon (IFN)- and/or lipopolysaccharide (LPS)-induced macrophages. Also plays a role in the regulation of dendritic cell maturation at the post-transcriptional level, and hence operates as part of a negative feedback loop to limit the inflammatory response. Promotes ARE-mediated mRNA decay of hypoxia-inducible factor HIF1A mRNA during the response of endothelial cells to hypoxia. Positively regulates early adipogenesis of preadipocytes by promoting ARE-mediated mRNA decay of immediate early genes (IEGs). Negatively regulates hematopoietic/erythroid cell differentiation by promoting ARE-mediated mRNA decay of the transcription factor STAT5B mRNA. Plays a role in maintaining skeletal muscle satellite cell quiescence by promoting ARE-mediated mRNA decay of the myogenic determination factor MYOD1 mRNA. Also associates with and regulates the expression of non-ARE-containing target mRNAs at the post-transcriptional level, such as MHC class I mRNAs. Participates in association with argonaute RISC catalytic components in the ARE-mediated mRNA decay mechanism; assists microRNA (miRNA) targeting ARE-containing mRNAs. May also play a role in the regulation of cytoplasmic mRNA decapping; enhances decapping of ARE-containing RNAs, in vitro. Involved in the delivery of target ARE-mRNAs to processing bodies (PBs). In addition to its cytosolic mRNA-decay function, affects nuclear pre-mRNA processing. Negatively regulates nuclear poly(A)-binding protein PABPN1-stimulated polyadenylation activity on ARE-containing pre-mRNA during LPS-stimulated macrophages. Also involved in the regulation of stress granule (SG) and P-body (PB) formation and fusion. Plays a role in the regulation of keratinocyte proliferation, differentiation and apoptosis. Plays a role as a tumor suppressor by inhibiting cell proliferation in breast cancer cells. This Bos taurus (Bovine) protein is mRNA decay activator protein ZFP36.